Here is a 149-residue protein sequence, read N- to C-terminus: Transcriptional repressor NrdR (149 aa).

The segment at 3-34 (CPFCTAEETKVIDSRLAADGYQIRRRRECIGC) is a zinc-finger region. The 91-residue stretch at 49 to 139 (PYIIKNNGNR…VYLSFDDIEE (91 aa)) folds into the ATP-cone domain.

Belongs to the NrdR family. Zn(2+) serves as cofactor.

Functionally, negatively regulates transcription of bacterial ribonucleotide reductase nrd genes and operons by binding to NrdR-boxes. The sequence is that of Transcriptional repressor NrdR from Haemophilus ducreyi (strain 35000HP / ATCC 700724).